Consider the following 260-residue polypeptide: GDSL esterase/lipase WDL1 (260 aa).

The first 35 residues, 1–35 (MLGFAPAPGRPLFVLFGSSIVQFSFSNGGWGAALA), serve as a signal peptide directing secretion. Ser-18 (nucleophile) is an active-site residue. N-linked (GlcNAc...) asparagine glycans are attached at residues Asn-83 and Asn-150. Catalysis depends on residues Asp-191 and His-194.

Belongs to the 'GDSL' lipolytic enzyme family. In terms of tissue distribution, highly expressed in panicles. Expressed in shoots, mature flowers and seeds.

The protein localises to the endoplasmic reticulum. Involved in the organization of leaf cuticle and wax crystals. This chain is GDSL esterase/lipase WDL1, found in Oryza sativa subsp. japonica (Rice).